A 381-amino-acid chain; its full sequence is tRNA (guanine(26)-N(2))-dimethyltransferase (381 aa).

The Trm1 methyltransferase domain occupies 7-378 (IEVQEGKAKI…APYEVFIETI (372 aa)). Arg39, Arg64, Asp81, Asp123, and Ala124 together coordinate S-adenosyl-L-methionine.

Belongs to the class I-like SAM-binding methyltransferase superfamily. Trm1 family.

The catalysed reaction is guanosine(26) in tRNA + 2 S-adenosyl-L-methionine = N(2)-dimethylguanosine(26) in tRNA + 2 S-adenosyl-L-homocysteine + 2 H(+). Its function is as follows. Dimethylates a single guanine residue at position 26 of a number of tRNAs using S-adenosyl-L-methionine as donor of the methyl groups. The polypeptide is tRNA (guanine(26)-N(2))-dimethyltransferase (Pyrococcus horikoshii (strain ATCC 700860 / DSM 12428 / JCM 9974 / NBRC 100139 / OT-3)).